We begin with the raw amino-acid sequence, 145 residues long: Putative nickel-responsive regulator (145 aa).

Residues histidine 77, histidine 88, histidine 90, and cysteine 96 each contribute to the Ni(2+) site.

It belongs to the transcriptional regulatory CopG/NikR family. Ni(2+) serves as cofactor.

Transcriptional regulator. The chain is Putative nickel-responsive regulator from Rhizobium rhizogenes (strain K84 / ATCC BAA-868) (Agrobacterium radiobacter).